The following is a 433-amino-acid chain: Serine--tRNA ligase (433 aa).

236–238 (TAE) provides a ligand contact to L-serine. 267–269 (RSE) serves as a coordination point for ATP. Glu290 contributes to the L-serine binding site. 354–357 (EISS) provides a ligand contact to ATP. Residue Ser394 participates in L-serine binding.

Belongs to the class-II aminoacyl-tRNA synthetase family. Type-1 seryl-tRNA synthetase subfamily. Homodimer. The tRNA molecule binds across the dimer.

It localises to the cytoplasm. It catalyses the reaction tRNA(Ser) + L-serine + ATP = L-seryl-tRNA(Ser) + AMP + diphosphate + H(+). The enzyme catalyses tRNA(Sec) + L-serine + ATP = L-seryl-tRNA(Sec) + AMP + diphosphate + H(+). It functions in the pathway aminoacyl-tRNA biosynthesis; selenocysteinyl-tRNA(Sec) biosynthesis; L-seryl-tRNA(Sec) from L-serine and tRNA(Sec): step 1/1. In terms of biological role, catalyzes the attachment of serine to tRNA(Ser). Is also able to aminoacylate tRNA(Sec) with serine, to form the misacylated tRNA L-seryl-tRNA(Sec), which will be further converted into selenocysteinyl-tRNA(Sec). In Acidiphilium cryptum (strain JF-5), this protein is Serine--tRNA ligase.